The primary structure comprises 378 residues: Phosphoserine aminotransferase (378 aa).

Arg53 is a binding site for L-glutamate. Pyridoxal 5'-phosphate is bound by residues Trp117, Thr167, Asp190, and Gln213. Lys214 bears the N6-(pyridoxal phosphate)lysine mark. A pyridoxal 5'-phosphate-binding site is contributed by 255–256 (NT).

The protein belongs to the class-V pyridoxal-phosphate-dependent aminotransferase family. SerC subfamily. As to quaternary structure, homodimer. The cofactor is pyridoxal 5'-phosphate.

Its subcellular location is the cytoplasm. It carries out the reaction O-phospho-L-serine + 2-oxoglutarate = 3-phosphooxypyruvate + L-glutamate. It catalyses the reaction 4-(phosphooxy)-L-threonine + 2-oxoglutarate = (R)-3-hydroxy-2-oxo-4-phosphooxybutanoate + L-glutamate. The protein operates within amino-acid biosynthesis; L-serine biosynthesis; L-serine from 3-phospho-D-glycerate: step 2/3. Its pathway is cofactor biosynthesis; pyridoxine 5'-phosphate biosynthesis; pyridoxine 5'-phosphate from D-erythrose 4-phosphate: step 3/5. In terms of biological role, catalyzes the reversible conversion of 3-phosphohydroxypyruvate to phosphoserine and of 3-hydroxy-2-oxo-4-phosphonooxybutanoate to phosphohydroxythreonine. This is Phosphoserine aminotransferase from Ralstonia nicotianae (strain ATCC BAA-1114 / GMI1000) (Ralstonia solanacearum).